A 215-amino-acid polypeptide reads, in one-letter code: Large ribosomal subunit protein uL4 (215 aa).

The tract at residues 43 to 101 (HQRQGTSKTKERGEVRGSGRKLYRQKGTGNARVGDAQSPIRRGGGRAHGARPRDYAHDL) is disordered. A compositionally biased stretch (basic and acidic residues) spans 50 to 59 (KTKERGEVRG).

It belongs to the universal ribosomal protein uL4 family. In terms of assembly, part of the 50S ribosomal subunit.

Functionally, one of the primary rRNA binding proteins, this protein initially binds near the 5'-end of the 23S rRNA. It is important during the early stages of 50S assembly. It makes multiple contacts with different domains of the 23S rRNA in the assembled 50S subunit and ribosome. Its function is as follows. Forms part of the polypeptide exit tunnel. This chain is Large ribosomal subunit protein uL4, found in Salinibacter ruber (strain DSM 13855 / M31).